Here is a 259-residue protein sequence, read N- to C-terminus: Pimeloyl-[acyl-carrier protein] methyl ester esterase (259 aa).

Residues F16–H241 form the AB hydrolase-1 domain. Substrate is bound by residues W22, S82 to M83, and F143 to Q147. Catalysis depends on S82, which acts as the Nucleophile. Catalysis depends on residues D207 and H235. Substrate is bound at residue H235.

Belongs to the AB hydrolase superfamily. Carboxylesterase BioH family. As to quaternary structure, monomer.

It localises to the cytoplasm. The catalysed reaction is 6-carboxyhexanoyl-[ACP] methyl ester + H2O = 6-carboxyhexanoyl-[ACP] + methanol + H(+). Its pathway is cofactor biosynthesis; biotin biosynthesis. Its function is as follows. The physiological role of BioH is to remove the methyl group introduced by BioC when the pimeloyl moiety is complete. It allows to synthesize pimeloyl-ACP via the fatty acid synthetic pathway through the hydrolysis of the ester bonds of pimeloyl-ACP esters. The sequence is that of Pimeloyl-[acyl-carrier protein] methyl ester esterase from Hamiltonella defensa subsp. Acyrthosiphon pisum (strain 5AT).